A 73-amino-acid polypeptide reads, in one-letter code: Disintegrin lutosin (73 aa).

The 73-residue stretch at 1 to 73 (EAGEECDCGS…ADCPRNGLYG (73 aa)) folds into the Disintegrin domain. Cystine bridges form between cysteine 6–cysteine 21, cysteine 8–cysteine 16, cysteine 15–cysteine 38, cysteine 29–cysteine 35, cysteine 34–cysteine 59, and cysteine 47–cysteine 66. Positions 51–53 (RGD) match the Cell attachment site motif.

It belongs to the venom metalloproteinase (M12B) family. P-II subfamily. P-IIa sub-subfamily. In terms of assembly, monomer (disintegrin). Expressed by the venom gland.

Its subcellular location is the secreted. In terms of biological role, inhibits fibrinogen interaction with platelets. Acts by binding to alpha-IIb/beta-3 (ITGA2B/ITGB3) on the platelet surface and inhibits aggregation induced by ADP, thrombin, platelet-activating factor and collagen. The chain is Disintegrin lutosin from Crotalus lutosus (Great basin rattlesnake).